Reading from the N-terminus, the 1432-residue chain is MDEDLMGFFDFSKEFKRTEAPKGCISSNFVGLGTEKEKTKPPKQENLGTEYVKEIVDREKQNLESLGIGGSAAKRNRTLDDIDSDNEECYEAPDLRLDEEFYSKYYFDLNRDKTLPIYTQRDQIMKAIRENTVVILKGETGCGKTTQVPQYIIDEAYQNRQYCNIVVTQPRRIAAISIANRVSQERHWEPGTVCSYQVGLHRQSGSEDARLLYCTTGVLLNFLINHKTLTHYTHIVLDEVHERDQEMDFLLIVVRRLLATNSRHVKVILMSATIDSREFVQYFATKNGIPPVINASHGRKYPLVKFYRDQLKNMQWQEDQPNPDEPGMGSHGYSAAIKILLVIDNMERRTEGQSQRSYEENLKTGSVLIFLPGINEIDNMAESIDHVMQENPALKVSIIRCHSLMTPDSQRDVFASPPVGYRKIILTTNIAESSITVPDVSYVIDFCLAKVLVTDTATNFSSLRLVWASKSNCRQRAGRVGRLRSGRVYRMVPKSFYMKHMLEFGVPEMLRSPLESSVLKAKELNMGPPIEMLALALSPPKLSDIRNTILLLKEVGALYPTVDGNYVELDGDLTPWGSIMTRLPLDIRLSRLVLLGYVFNCLDEAIVMAAGLSVRGLYLQEAGFQSYEAYWMHYVFADGSSSDLVAIWRFYKTYLNMCENRIMQESAAQWARRYHISLRSLKEMHLLVQELQYRCNKLRLHPVQLQSCQIKDDRERALILKILIAGAFYPNYFIRSNKFNPDYGRNTYQVLGGYDPCRTVYFTHFEPRYMGELYTRRIKDLFSEAKIPPENMDVNFQVGSEKIFVTFKQTEDEMDQLNLIQVPGRILTDVYKAVRLRIGKQYRPIRVMELPHAIQYVQENKIGTVIEGQWHPPSKPFNAGLMALPSVYDKNMIGYITHIVSCGKFFFQPLELADSITNMSEHINSPKNLSHYVVDAGSITKNLKLLAKRVDDFQRAQVIRVETHSHQYPKFRVRFIDYGDIAVVPMDQLRFMSNQLKREYDDLPPRCFECRLALVQPAALTSNYNRWPIKANEMVRKIAMDGRVEMEIYSLVNNVAAVFIKMREGVLNDKLVEKNYARRSDEDFASIQDHDFRLRKQERSFHVPRAERKQVNEEYLRVSRLPQDADLSPPPMHKCQTVVRLKGPYSPLEASMFSTIRASACKTVRIDPLSVNSVLLDSNPQDRHDQLIVSASVTTSNNNQVLTVRGSTVMPNTHGFGALMALIFCPTVQIKCNKECTKFVSLLAGLGYNPETMEPYYEDHDVVMNLDVNLLEDDVRLINQMRYNIDTIFFKYEGEDAPAVSEGDRSIVFNQLRCLLSRLLSKDRCYIEPHSSNLDNVWEKLDNLEPQSEPYGKRAIFPMHTIPELQNEDTTARLVLQENCKRLYSWRTFDGVLQPLDCKLCNQRLETVSQLRLHLLSQLHRDREKQIGFQDN.

The region spanning 125 to 292 (MKAIRENTVV…FATKNGIPPV (168 aa)) is the Helicase ATP-binding domain. ATP is bound at residue 138-145 (GETGCGKT). The DEAH box motif lies at 238–241 (DEVH). In terms of domain architecture, Helicase C-terminal spans 342–525 (VIDNMERRTE…SSVLKAKELN (184 aa)). The Tudor domain occupies 936–999 (AGSITKNLKL…RFMSNQLKRE (64 aa)).

It belongs to the DEAD box helicase family. DEAH subfamily.

The protein resides in the cytoplasm. It catalyses the reaction ATP + H2O = ADP + phosphate + H(+). Probable ATP-binding RNA helicase which plays a central role during spermatogenesis and oogenesis by repressing transposable elements and preventing their mobilization, which is essential for the germline integrity. Acts via the piRNA metabolic process, which mediates the repression of transposable elements during meiosis by forming complexes composed of piRNAs and Piwi and govern the methylation and subsequent repression of transposons. Involved in the repression of LTR retrotransposon copia. Also involved in telomere regulation by repressing specialized telomeric retroelements HeT-A, TAHRE, and TART; Drosophila telomeres being maintained by transposition of specialized telomeric retroelements. Involved in telomeric trans-silencing, a repression mechanism by which a transposon or a transgene inserted in subtelomeric heterochromatin has the capacity to repress in trans in the female germline, a homologous transposon, or transgene located in euchromatin. Involved in the repression of testis-expressed Stellate genes by the homologous Su(Ste) repeats. Required for anteroposterior and dorsoventral axis formation during oogenesis. The chain is Probable ATP-dependent RNA helicase spindle-E (spn-E) from Drosophila willistoni (Fruit fly).